The chain runs to 134 residues: Terepressin/terephysin (134 aa).

A signal peptide spans 1–33 (MKCSVLPRSRLSWTMCVLLLPLLMLMLEGGVQG). A disulfide bridge links C34 with C39. A propeptide spanning residues 44 to 50 (KRAVDSV) is cleaved from the precursor. Disulfide bonds link C56–C100, C59–C73, C67–C90, C74–C80, C107–C121, C115–C133, and C122–C127.

The protein belongs to the vasopressin/oxytocin family. Contains 7 disulfide bonds. As to expression, expressed by the venom duct.

Its subcellular location is the secreted. This chain is Terepressin/terephysin, found in Terebra subulata (Chocolate spotted auger).